We begin with the raw amino-acid sequence, 1206 residues long: Phosphoglucan, water dikinase, chloroplastic (1206 aa).

Disordered stretches follow at residues 1–20 (MTSL…PRRG) and 52–71 (RSAA…DSSK). The transit peptide at 1–56 (MTSLRPLETSLSIGGRPRRGLVLPPPGVGAGVLLRRGAMALPGRRGFACRGRSAAS) directs the protein to the chloroplast. The 102-residue stretch at 67–168 (RDSSKQPLVH…KFDIVCHWNR (102 aa)) folds into the CBM20 domain. The active-site Tele-phosphohistidine intermediate is H776.

This sequence belongs to the PEP-utilizing enzyme family. In terms of assembly, homodimer. Requires Mg(2+) as cofactor.

The protein resides in the plastid. It is found in the chloroplast. The catalysed reaction is [(1-&gt;4)-6-phospho-alpha-D-glucosyl](n) + n ATP + n H2O = [(1-&gt;4)-3,6-bisphospho-alpha-D-glucosyl](n) + n AMP + n phosphate + 2n H(+). Mediates the incorporation of phosphate into starch-like phospho-alpha-glucan, mostly at the C-3 position of glucose units. May be required for starch degradation, suggesting that the phosphate content of starch regulates its degradability. The protein is Phosphoglucan, water dikinase, chloroplastic (GWD3) of Oryza sativa subsp. japonica (Rice).